The sequence spans 955 residues: Protein translocase subunit SecA (955 aa).

ATP contacts are provided by residues Gln87, 105–109 (GEGKT), and Asp494. The segment at 861–955 (ASPAPAAPRP…KKAPRTKRKR (95 aa)) is disordered. The span at 874-888 (QEAAQQAQGTAAPSA) shows a compositional bias: low complexity. Residues 943-955 (SKGKKAPRTKRKR) show a composition bias toward basic residues.

The protein belongs to the SecA family. In terms of assembly, monomer and homodimer. Part of the essential Sec protein translocation apparatus which comprises SecA, SecYEG and auxiliary proteins SecDF. Other proteins may also be involved.

It localises to the cell membrane. The protein localises to the cytoplasm. It carries out the reaction ATP + H2O + cellular proteinSide 1 = ADP + phosphate + cellular proteinSide 2.. Its function is as follows. Part of the Sec protein translocase complex. Interacts with the SecYEG preprotein conducting channel. Has a central role in coupling the hydrolysis of ATP to the transfer of proteins into and across the cell membrane, serving as an ATP-driven molecular motor driving the stepwise translocation of polypeptide chains across the membrane. This chain is Protein translocase subunit SecA, found in Rhodococcus jostii (strain RHA1).